A 207-amino-acid polypeptide reads, in one-letter code: MARYLGPKAKLSRREGTDLFLKSARRSIADKSKFDSKPGQHGRTSGARTSDYGLQLREKQKVKRMYGVLEKQFRRYFEAAESRKGNTGANLLFLLESRLDNVVYRMGFGSTRAEARQLVSHKAITVNGQSVNIPSYLVKTGDLVAVREKSKKQGRIAEALQLATQVGMPAWVEVNTEKAEGLFKKAPDRDEFGADINESLIVELYSR.

Residues 30-51 form a disordered region; sequence DKSKFDSKPGQHGRTSGARTSD. Residues 97–157 form the S4 RNA-binding domain; that stretch reads SRLDNVVYRM…EKSKKQGRIA (61 aa).

The protein belongs to the universal ribosomal protein uS4 family. In terms of assembly, part of the 30S ribosomal subunit. Contacts protein S5. The interaction surface between S4 and S5 is involved in control of translational fidelity.

Functionally, one of the primary rRNA binding proteins, it binds directly to 16S rRNA where it nucleates assembly of the body of the 30S subunit. Its function is as follows. With S5 and S12 plays an important role in translational accuracy. The sequence is that of Small ribosomal subunit protein uS4 from Verminephrobacter eiseniae (strain EF01-2).